A 324-amino-acid chain; its full sequence is NADH-ubiquinone oxidoreductase chain 1 (324 aa).

Transmembrane regions (helical) follow at residues 10–30, 76–96, 107–127, 143–163, 178–198, 229–249, 260–280, and 300–320; these read MIMTLSYIIPILIAVAFLTLV, FLFIMTPILALLLALTIWIPL, LGLLFLLAMSSLTVYSLLWSG, VAQTISYEVTLAIILLSTIML, PIYLIFSSWPLAMMWYISTLA, LFFLAEYANIMLMNTLTITLF, ELFSITLATKVLLLSSSFLWV, and FLPLTLALCLWHTSMPISYAG.

The protein belongs to the complex I subunit 1 family.

The protein localises to the mitochondrion inner membrane. The enzyme catalyses a ubiquinone + NADH + 5 H(+)(in) = a ubiquinol + NAD(+) + 4 H(+)(out). Functionally, core subunit of the mitochondrial membrane respiratory chain NADH dehydrogenase (Complex I) that is believed to belong to the minimal assembly required for catalysis. Complex I functions in the transfer of electrons from NADH to the respiratory chain. The immediate electron acceptor for the enzyme is believed to be ubiquinone. This is NADH-ubiquinone oxidoreductase chain 1 (MT-ND1) from Excalfactoria chinensis (Blue-breasted quail).